Reading from the N-terminus, the 145-residue chain is Functional amyloid chaperone FapA (145 aa).

Positions 1–27 are cleaved as a signal peptide; the sequence is MRKRDKRLYHLLLVGCVLGSLSLTAQA.

Belongs to the FapA family. Monomer in solution. Interacts with FapC but not FapB in vitro.

Its subcellular location is the periplasm. In terms of biological role, an intrinsically disordered chaperone for fibril amyloid FapC that guards against fibrillation, pro within the periplasm. Upon overexpression of the endogenous six-gene locus (fapA-fapF), cells form large clumps during liquid growth, make large amounts of biofilm and produce relatively unstable amyloid fibrils. The protein is Functional amyloid chaperone FapA of Pseudomonas putida (strain ATCC 700007 / DSM 6899 / JCM 31910 / BCRC 17059 / LMG 24140 / F1).